Here is a 647-residue protein sequence, read N- to C-terminus: Leucine-rich repeat and WD repeat-containing protein 1 (647 aa).

4 LRR repeats span residues 22-43 (KIRS…PKLL), 48-69 (QLQE…LGLS), 70-91 (HLRV…CQFP), and 92-113 (KLEE…LKVS). Residues 204–267 (RTQVQKANSP…GSPVAGSDGS (64 aa)) are disordered. Phosphoserine occurs at positions 212, 243, 251, 259, and 264. WD repeat units lie at residues 282–335 (HSKN…LHKY), 341–379 (EFFS…LLHV), 383–422 (FCCG…LWDI), 426–472 (NQDY…CWDV), 484–526 (EVEF…LWSW), 542–582 (VVLA…LYDV), and 598–646 (APTQ…IWGR).

It belongs to the LRWD1 family. As to quaternary structure, integral component of the ORC complex. Directly interacts with CDT1, GMNN and ORC2. Interacts with ORC2 only when non-ubiquitinated; this interaction prevents LRWD1 ubiquitination and degradation. Some of these interactions are regulated in a cell-cycle dependent manner. Interaction with ORC1 occurs predominantly during G1. Association with phosphorylated ORC1 during mitosis is not efficient. Interaction with CDT1 occurs during G1 phase, as well as during mitosis with phosphorylated CDT1. Interaction with GMNN occurs from G1/S to mitosis. Interaction with ORC2 is observed throughout the cell cycle. The stoichiometry of the ORCA/ORC/CDT1/GMNN complex is 1:1:1:2. Interacts with CUL4A and DDB1; this interaction may lead to ubiquitination. In terms of processing, ubiquitinated; undergoes 'Lys-48'-linked polyubiquitination leading to proteasomal degradation. Ubiquitination occurs within the WD repeats at the end of the G1 phase. Ubiquitination may be catalyzed by the CUL4-DDB1 E3 ubiquitin-protein ligase complex and other E3 ligases. As to expression, testis-specific. Drastically down-regulated in testis from patients with Sertoli cell-only syndrome (SCOS).

The protein localises to the nucleus. It is found in the chromosome. The protein resides in the centromere. Its subcellular location is the telomere. It localises to the cytoplasm. The protein localises to the cytoskeleton. It is found in the microtubule organizing center. The protein resides in the centrosome. Its subcellular location is the kinetochore. Its function is as follows. Required for G1/S transition. Recruits and stabilizes the origin recognition complex (ORC) onto chromatin during G1 to establish pre-replication complex (preRC) and to heterochromatic sites in post-replicated cells. Binds a combination of DNA and histone methylation repressive marks on heterochromatin. Binds histone H3 and H4 trimethylation marks H3K9me3, H3K27me3 and H4K20me3 in a cooperative manner with DNA methylation. Required for silencing of major satellite repeats. May be important ORC2, ORC3 and ORC4 stability. This is Leucine-rich repeat and WD repeat-containing protein 1 (LRWD1) from Homo sapiens (Human).